Consider the following 282-residue polypeptide: Succinate dehydrogenase [ubiquinone] iron-sulfur subunit, mitochondrial (282 aa).

The transit peptide at 1–30 (MAATVGVSLKRGFPAAVLGRVGLQFQACRG) directs the protein to the mitochondrion. One can recognise a 2Fe-2S ferredoxin-type domain in the interval 42–135 (KKFAIYRWDP…VSKIYPLPHM (94 aa)). Residues K53 and K57 each carry the N6-acetyllysine modification. C95, C100, C103, and C115 together coordinate [2Fe-2S] cluster. Residues 148 to 220 (FYAQYKSIEP…PAVLMQAYRW (73 aa)) form an interaction with SDHAF1 region. The 4Fe-4S ferredoxin-type domain occupies 178–208 (DREKLDGLYECILCACCSTSCPSYWWNGDKY). [4Fe-4S] cluster contacts are provided by C188, C191, and C194. [3Fe-4S] cluster is bound at residue C198. W203 is a binding site for a ubiquinone. The [3Fe-4S] cluster site is built by C245 and C251. A [4Fe-4S] cluster-binding site is contributed by C255.

It belongs to the succinate dehydrogenase/fumarate reductase iron-sulfur protein family. Component of complex II composed of four subunits: the flavoprotein (FP) SDHA, iron-sulfur protein (IP) SDHB, and a cytochrome b560 composed of SDHC and SDHD. Interacts with SDHAF1; the interaction is required for iron-sulfur cluster incorporation into SDHB. [2Fe-2S] cluster serves as cofactor. It depends on [3Fe-4S] cluster as a cofactor. The cofactor is [4Fe-4S] cluster.

It localises to the mitochondrion inner membrane. The enzyme catalyses a quinone + succinate = fumarate + a quinol. It catalyses the reaction (R)-malate + a quinone = enol-oxaloacetate + a quinol. The catalysed reaction is (S)-malate + a quinone = enol-oxaloacetate + a quinol. It functions in the pathway carbohydrate metabolism; tricarboxylic acid cycle; fumarate from succinate (eukaryal route): step 1/1. Its activity is regulated as follows. Enol-oxaloacetate inhibits the succinate dehydrogenase activity. Functionally, iron-sulfur protein (IP) subunit of the succinate dehydrogenase complex (mitochondrial respiratory chain complex II), responsible for transferring electrons from succinate to ubiquinone (coenzyme Q). SDH also oxidizes malate to the non-canonical enol form of oxaloacetate, enol-oxaloacetate. Enol-oxaloacetate, which is a potent inhibitor of the succinate dehydrogenase activity, is further isomerized into keto-oxaloacetate. This is Succinate dehydrogenase [ubiquinone] iron-sulfur subunit, mitochondrial (Sdhb) from Mus musculus (Mouse).